Consider the following 845-residue polypeptide: Poly(A) RNA polymerase gld-4 (845 aa).

The interval 1–55 (MNEDSRLSSSQQPSTSTPRSSIPSTMNSDEPNTCRRLSQSQEQPSTSRTCKSETP) is disordered. Over residues 7-25 (LSSSQQPSTSTPRSSIPST) the composition is skewed to low complexity. Residues 26-49 (MNSDEPNTCRRLSQSQEQPSTSRT) are compositionally biased toward polar residues. 2 residues coordinate Mg(2+): Asp139 and Asp141. The 60-residue stretch at 276–335 (NLGHLLLRFLELYSLEFNFEEMGISPGQCCYIPKSASGARYGHKQAQPGNLALEDPLLTA) folds into the PAP-associated domain. Residues 482–506 (KSLEKMPACDDNKKEEELVATRETD) show a composition bias toward basic and acidic residues. 2 disordered regions span residues 482 to 733 (KSLE…SEEP) and 788 to 845 (NALT…RLQR). The span at 535–551 (TSTQSVNTSATVSTAAS) shows a compositional bias: low complexity. Polar residues-rich tracts occupy residues 561 to 571 (PGLSSSMGNQS) and 579 to 588 (GINNRNNSAV). Positions 605-620 (RESKRTQTTSEDKMQD) are enriched in basic and acidic residues. A compositionally biased stretch (basic residues) spans 643 to 653 (SHKHRNAHPQR). Composition is skewed to polar residues over residues 654-666 (QRPS…QGSD), 695-732 (RQQT…SSEE), 788-805 (NALT…TSMQ), and 819-828 (DNNSATSSTD).

In terms of assembly, interacts with gls-1 isoform C. Requires Mg(2+) as cofactor. Mn(2+) is required as a cofactor. As to expression, germline-specific.

It localises to the cytoplasm. Its subcellular location is the cytoplasmic granule. It is found in the perinuclear region. The catalysed reaction is RNA(n) + ATP = RNA(n)-3'-adenine ribonucleotide + diphosphate. Its function is as follows. Cytoplasmic poly(A) RNA polymerase that adds successive AMP monomers to the 3'-end of specific RNAs, forming a poly(A) tail. The enzymatic activity is enhanced by its interaction with gls-1. Required, together with gld-2, for early meiotic progression in male and female germ cells and for gld-1 protein accumulation in the hermaphrodite germline. In the germline, forms a complex with gls-1 which directly binds to gld-1 mRNA and prevents its degradation. This Caenorhabditis elegans protein is Poly(A) RNA polymerase gld-4.